Reading from the N-terminus, the 536-residue chain is MDELGSRNPSIGLESIGFSDLSVVRYNFEAAQLYEEALARGEAELTAHGALCARTGQHTGRSPKDKYVVRDANTADQIWWDNNSAISPEHFEVLRRDMLAHAKGMSLYVQDLVGGADPENALPTRVVTEFAWHSLFIRNLLIRPEREALPSFQPKLTIIDLPSFKADPVRHGCRSETVIACDLTNGLVLIGGTSYAGEMKKSVFTVLNYLLPEKSVMPMHCSANVGPAGDTAIFFGLSGTGKTTLSADPNRTLIGDDEHGWSEKGVFNFEGGCYAKAIRLSEAAEPEIFATTRRFGTVMENVVLDERRLPDFDDGSLTENTRCAYPLHFIPNASKTGTAPQPRTIIMLTADAFGVLPPIAKLTPEQAMYHFLSGYTAKVAGTEKGVTEPEATFSTCFGAPFMPRHPSEYGNLLKDLIARNGVTCWLVNTGWTGGAFGTGSRMPIKVTRALLSAALDGSLNNASFRTDANFGFAVPVSVPGVEAGILDPRSTWADGVAYDTQARRLVDMFIANFAKFERHVDGSVRDAAPGARVAAE.

Residues Arg61, Tyr195, and Lys201 each coordinate substrate. ATP is bound by residues Lys201, His220, and Gly236–Thr244. Lys201 and His220 together coordinate Mn(2+). Asp257 is a Mn(2+) binding site. 3 residues coordinate ATP: Glu285, Arg322, and Thr447. Arg322 lines the substrate pocket.

It belongs to the phosphoenolpyruvate carboxykinase (ATP) family. Mn(2+) serves as cofactor.

The protein localises to the cytoplasm. It catalyses the reaction oxaloacetate + ATP = phosphoenolpyruvate + ADP + CO2. The protein operates within carbohydrate biosynthesis; gluconeogenesis. In terms of biological role, involved in the gluconeogenesis. Catalyzes the conversion of oxaloacetate (OAA) to phosphoenolpyruvate (PEP) through direct phosphoryl transfer between the nucleoside triphosphate and OAA. In Rhizobium meliloti (strain 1021) (Ensifer meliloti), this protein is Phosphoenolpyruvate carboxykinase (ATP).